The sequence spans 181 residues: Probable cobalt-precorrin-6B C(15)-methyltransferase (decarboxylating) (181 aa).

S-adenosyl-L-methionine contacts are provided by residues Thr16, 40–44 (GCGSG), Asp61, and Ala89.

It belongs to the methyltransferase superfamily. Archaeal-type CbiT family.

The enzyme catalyses Co-precorrin-6B + S-adenosyl-L-methionine = Co-precorrin-7 + S-adenosyl-L-homocysteine + CO2. The protein operates within cofactor biosynthesis; adenosylcobalamin biosynthesis; cob(II)yrinate a,c-diamide from sirohydrochlorin (anaerobic route): step 8/10. Its function is as follows. Catalyzes the methylation of C-15 in cobalt-precorrin-6B followed by the decarboxylation of C-12 to form cobalt-precorrin-7. The polypeptide is Probable cobalt-precorrin-6B C(15)-methyltransferase (decarboxylating) (Methanococcus maripaludis (strain C7 / ATCC BAA-1331)).